Here is a 1232-residue protein sequence, read N- to C-terminus: DNA topoisomerase 2 (1232 aa).

ATP contacts are provided by residues N65, N94, S122–N124, G135–K142, and Q352–K354. Residues R432–I546 form the Toprim domain. Residues E438, D515, and D517 each contribute to the Mg(2+) site. Positions L681–L1097 constitute a Topo IIA-type catalytic domain. Y771 acts as the O-(5'-phospho-DNA)-tyrosine intermediate in catalysis. An interaction with DNA region spans residues S952–G961. Positions Y1161–S1184 are disordered. Residues S1175–S1184 show a composition bias toward gly residues.

Belongs to the type II topoisomerase family. As to quaternary structure, homodimer. Mg(2+) is required as a cofactor. The cofactor is Mn(2+). Requires Ca(2+) as cofactor.

It localises to the nucleus. The enzyme catalyses ATP-dependent breakage, passage and rejoining of double-stranded DNA.. In terms of biological role, control of topological states of DNA by transient breakage and subsequent rejoining of DNA strands. Topoisomerase II makes double-strand breaks. The sequence is that of DNA topoisomerase 2 (TOP2) from Trypanosoma cruzi.